The sequence spans 248 residues: Trypsin II-P29 (248 aa).

An N-terminal signal peptide occupies residues 1 to 16; sequence MKFLFLILSCLGAAVA. The propeptide at 17 to 25 is activation peptide; it reads FPGGADDDK. The Peptidase S1 domain occupies 26 to 246; sequence IVGGYTCPEH…YVDWIQETIA (221 aa). 6 cysteine pairs are disulfide-bonded: C32–C162, C50–C66, C134–C235, C141–C208, C173–C187, and C198–C222. H65 functions as the Charge relay system in the catalytic mechanism. E77, N79, V82, and E87 together coordinate Ca(2+). Catalysis depends on D109, which acts as the Charge relay system. The active-site Charge relay system is S202.

This sequence belongs to the peptidase S1 family. It depends on Ca(2+) as a cofactor. As to expression, high levels are seen in the pancreas while lower levels are found in the liver, spleen and thymus.

Its subcellular location is the secreted. It localises to the extracellular space. It catalyses the reaction Preferential cleavage: Arg-|-Xaa, Lys-|-Xaa.. In Gallus gallus (Chicken), this protein is Trypsin II-P29.